The primary structure comprises 324 residues: MKFDRHRRLRSSATMRDMVRENHVRKEDLIYPIFVVEKDDVKKEIKSLPGVYQISLNLLESELKEAYDLGIRAIMFFGVPNSKDDIGTGAYIHDGVIQQATRIAKKMYDDLLIVADTCLCEYTDHGHCGVIDDHTHDVDNDKSLPLLVKTAISQVEAGADIIAPSNMMDGFVAEIRRGLDEAGYYNIPIMSYGVKYASSFFGPFRDAADSAPSFGDRKTYQMDPANRLEALRELESDLKEGCDMMIVKPALSYLDIVRDVKNHTNVPVVAYNVSGEYSMTKAAAQNGWIDEERVVMEQMVSMKRAGADMIITYFAKDICRYLDK.

Zn(2+) contacts are provided by cysteine 118, cysteine 120, and cysteine 128. Lysine 195 serves as the catalytic Schiff-base intermediate with substrate. Residues arginine 205 and arginine 217 each coordinate 5-aminolevulinate. Position 233 (glutamate 233) interacts with Mg(2+). Lysine 248 (schiff-base intermediate with substrate) is an active-site residue. Residues serine 274 and tyrosine 313 each contribute to the 5-aminolevulinate site.

It belongs to the ALAD family. As to quaternary structure, homooctamer. Requires Zn(2+) as cofactor.

It carries out the reaction 2 5-aminolevulinate = porphobilinogen + 2 H2O + H(+). The protein operates within porphyrin-containing compound metabolism; protoporphyrin-IX biosynthesis; coproporphyrinogen-III from 5-aminolevulinate: step 1/4. In terms of biological role, catalyzes an early step in the biosynthesis of tetrapyrroles. Binds two molecules of 5-aminolevulinate per subunit, each at a distinct site, and catalyzes their condensation to form porphobilinogen. This is Delta-aminolevulinic acid dehydratase (hemB) from Staphylococcus aureus (strain NCTC 8325 / PS 47).